Here is a 549-residue protein sequence, read N- to C-terminus: Mitochondrial hydroperoxide bicyclase CYP50918A1 (549 aa).

The disordered stretch occupies residues 1 to 75 (MPDAFDVSDD…PQGNRKPAVL (75 aa)). Residues 8-26 (SDDKQLVDQQLTRDSDSKP) show a composition bias toward basic and acidic residues. Over residues 27–41 (AAKPASKQKPPSKVP) the composition is skewed to low complexity. Position 491 (Cys491) interacts with heme. Positions 528–549 (DTGDHGPPNGKFSVIKPRQPKH) are disordered.

It belongs to the cytochrome P450 family. The cofactor is heme.

It is found in the mitochondrion. The catalysed reaction is (13S)-hydroperoxy-(9Z,11E,15Z)-octadecatrienoate = plasmodiophorol A. The enzyme catalyses (13S)-hydroperoxy-(9Z,11E,15Z)-octadecatrienoate = plasmodiophorol B. Its pathway is lipid metabolism; oxylipin biosynthesis. Functionally, cytochrome P450 hydroperoxide bicyclase involved in the metabolism of oxylipins natural products such as egregiachlorides, hybridalactone, ecklonialactones and related bicyclic oxylipins. Isomerizes the hydroperoxides into epoxyalcohols via epoxyallylic radical. Can use alpha-linolenic 13-hydroperoxide ((9Z,11E,13S,15Z)-13-hydroperoxy-9,11,15-octadecatrienoic, 13-HPOT) as preferred substrate to produce the heterobicyclic oxylipins plasmodiophorol A (6-oxabicyclo[3.1.0]hexane) and plasmodiophorol B (2-oxabicyclo[2.2.1]heptane) at the ratio 12:1 and a minor product plasmodiophorol C (cyclopentanediol) formed through the hydrolysis of plasmodiophorols A and B and, to a lower extent, active with linoleic acid 13-hydroperoxide ((9Z,11E,13S)-13-hydroperoxy-9,11-octadecadienoic, 13-HPOD), linoleic acid 9-hydroperoxide ((9S,10E,12Z)-9-hydroperoxy-10,12-octadecadienoic, 9-HPOD) and alpha-linolenic 9-hydroperoxide ((9S,10E,12Z,15Z)-9-hydroperoxy-10,12,15-octadecatrienoic, 9-HPOT). The chain is Mitochondrial hydroperoxide bicyclase CYP50918A1 from Plasmodiophora brassicae (Clubroot disease agent).